A 137-amino-acid chain; its full sequence is Small ribosomal subunit protein bS6 (137 aa).

Positions 99 to 137 (LSPMKAAESREDRRSGGDDRPRRSADSEERQSASQDEEE) are disordered. The segment covering 105 to 129 (AESREDRRSGGDDRPRRSADSEERQ) has biased composition (basic and acidic residues).

The protein belongs to the bacterial ribosomal protein bS6 family.

In terms of biological role, binds together with bS18 to 16S ribosomal RNA. The chain is Small ribosomal subunit protein bS6 from Marinobacter nauticus (strain ATCC 700491 / DSM 11845 / VT8) (Marinobacter aquaeolei).